The chain runs to 328 residues: MFIIKSMLYRLMQMIVVLFVISTLTFILMKLSPGNPVDKILHLDVAQVSTEQINATKDKLGLNDSLLVQWWHWMNHLLHFNLGKSFESKEPVTQILFNYAPITLLISFSTLVVSLCISIPLGIIAAKRFHKWTDKVIRVISTLSISLPAFFIGIILLFIVTNLMNIDSVILSQFILPVITLSLGMCAYIIRLVRSNLLMLLQSNIVQASRLRGMNERYILIHDLLKPTILPIIPLLGISLGSLIGGTVVIENLFDIPGIGYLLMDSIKSRDYPVIQGCVLFIGFFVVIINTIADLLTLLLDPKQRLQLGNPKIKTNTPLISVSSDRHA.

6 helical membrane-spanning segments follow: residues 11 to 31 (LMQM…LMKL), 104 to 124 (LLIS…LGII), 139 to 159 (VIST…LLFI), 170 to 190 (ILSQ…AYII), 229 to 249 (ILPI…GTVV), and 279 to 299 (VLFI…LTLL). Residues 100-297 (APITLLISFS…IINTIADLLT (198 aa)) enclose the ABC transmembrane type-1 domain.

The protein belongs to the binding-protein-dependent transport system permease family. OppBC subfamily. In terms of assembly, the complex is composed of two ATP-binding proteins (NikD and NikE), two transmembrane proteins (NikB and NikC) and a solute-binding protein (NikA).

It localises to the cell membrane. Its function is as follows. Part of the ABC transporter complex NikABCDE (Opp2) involved in nickel import. Probably responsible for the translocation of the substrate across the membrane. In Staphylococcus aureus (strain MSSA476), this protein is Nickel import system permease protein NikB.